Here is a 97-residue protein sequence, read N- to C-terminus: MSNRIYWHRCSGLNPFQIITSLRLTQPGQRLGIANQGYRRFLLVSSSIADTRELSMSYHPSTYLTQSGNILPSVDKGLCFEKLLETVFLSVGGCVRL.

This is an uncharacterized protein from Emericella nidulans (Aspergillus nidulans).